The following is a 1239-amino-acid chain: DNA-directed RNA polymerase subunit beta (1239 aa).

The tract at residues 1182–1239 (IEGAENQLEDKEEKEEEKEENYKEDSDEYDDLREEDVEPDLEELSLDDLDLDDFGDEH) is disordered. Acidic residues-rich tracts occupy residues 1191–1200 (DKEEKEEEKE) and 1206–1239 (DSDE…GDEH).

It belongs to the RNA polymerase beta chain family. As to quaternary structure, the RNAP catalytic core consists of 2 alpha, 1 beta, 1 beta' and 1 omega subunit. When a sigma factor is associated with the core the holoenzyme is formed, which can initiate transcription.

The catalysed reaction is RNA(n) + a ribonucleoside 5'-triphosphate = RNA(n+1) + diphosphate. Its function is as follows. DNA-dependent RNA polymerase catalyzes the transcription of DNA into RNA using the four ribonucleoside triphosphates as substrates. In Clostridium botulinum (strain Loch Maree / Type A3), this protein is DNA-directed RNA polymerase subunit beta.